The sequence spans 62 residues: Putative antitoxin AF_1095 (62 aa).

The protein belongs to the UPF0165 family.

Its function is as follows. Possibly the antitoxin component of a type II toxin-antitoxin (TA) system. The chain is Putative antitoxin AF_1095 from Archaeoglobus fulgidus (strain ATCC 49558 / DSM 4304 / JCM 9628 / NBRC 100126 / VC-16).